The following is a 587-amino-acid chain: Hatching enzyme (587 aa).

The N-terminal stretch at 1 to 18 is a signal peptide; the sequence is MANSGLILLVMFMIHVTT. The propeptide at 19 to 166 is activation peptide; that stretch reads VHNVPLPSTA…PRCGVPDVLP (148 aa). N-linked (GlcNAc...) asparagine glycans are attached at residues N64, N126, and N141. The Cysteine switch motif lies at 157 to 164; sequence PRCGVPDV. Positions 159 and 283 each coordinate Zn(2+). Residue E284 is part of the active site. The Zn(2+) site is built by H287 and H293. Residues 325–382 form a disordered region; that stretch reads LYGSNSGSGTTTTTRRPTTTRATTTRRTTTTRATTTRATTTTTTSPSRPSPPRRACSG. A compositionally biased stretch (low complexity) spans 334–371; that stretch reads TTTTTRRPTTTRATTTRRTTTTRATTTRATTTTTTSPS. C380 and C582 form a disulfide bridge. Hemopexin repeat units follow at residues 381–422, 425–468, 469–513, and 518–570; these read SGSF…RFGF, PQNI…WVGL, PCNI…FNDV, and HDGV…IPQC. The N-linked (GlcNAc...) asparagine glycan is linked to N584.

The protein belongs to the peptidase M10A family. It depends on Zn(2+) as a cofactor.

The enzyme catalyses Hydrolysis of proteins of the fertilization envelope and dimethylcasein.. In terms of biological role, allows the sea urchin to digest the protective envelope derived from the egg extracellular matrix; thus allowing the sea urchin to swim freely. The polypeptide is Hatching enzyme (Paracentrotus lividus (Common sea urchin)).